Here is a 116-residue protein sequence, read N- to C-terminus: Large ribosomal subunit protein uL22 (116 aa).

Belongs to the universal ribosomal protein uL22 family. As to quaternary structure, part of the 50S ribosomal subunit.

This protein binds specifically to 23S rRNA; its binding is stimulated by other ribosomal proteins, e.g. L4, L17, and L20. It is important during the early stages of 50S assembly. It makes multiple contacts with different domains of the 23S rRNA in the assembled 50S subunit and ribosome. Its function is as follows. The globular domain of the protein is located near the polypeptide exit tunnel on the outside of the subunit, while an extended beta-hairpin is found that lines the wall of the exit tunnel in the center of the 70S ribosome. The chain is Large ribosomal subunit protein uL22 from Wolbachia pipientis subsp. Culex pipiens (strain wPip).